We begin with the raw amino-acid sequence, 367 residues long: UDP-N-acetylglucosamine--N-acetylmuramyl-(pentapeptide) pyrophosphoryl-undecaprenol N-acetylglucosamine transferase (367 aa).

UDP-N-acetyl-alpha-D-glucosamine contacts are provided by residues 13–15, asparagine 125, arginine 165, serine 192, and glutamine 293; that span reads TGG.

It belongs to the glycosyltransferase 28 family. MurG subfamily.

It localises to the cell inner membrane. It carries out the reaction di-trans,octa-cis-undecaprenyl diphospho-N-acetyl-alpha-D-muramoyl-L-alanyl-D-glutamyl-meso-2,6-diaminopimeloyl-D-alanyl-D-alanine + UDP-N-acetyl-alpha-D-glucosamine = di-trans,octa-cis-undecaprenyl diphospho-[N-acetyl-alpha-D-glucosaminyl-(1-&gt;4)]-N-acetyl-alpha-D-muramoyl-L-alanyl-D-glutamyl-meso-2,6-diaminopimeloyl-D-alanyl-D-alanine + UDP + H(+). It functions in the pathway cell wall biogenesis; peptidoglycan biosynthesis. In terms of biological role, cell wall formation. Catalyzes the transfer of a GlcNAc subunit on undecaprenyl-pyrophosphoryl-MurNAc-pentapeptide (lipid intermediate I) to form undecaprenyl-pyrophosphoryl-MurNAc-(pentapeptide)GlcNAc (lipid intermediate II). The protein is UDP-N-acetylglucosamine--N-acetylmuramyl-(pentapeptide) pyrophosphoryl-undecaprenol N-acetylglucosamine transferase of Jannaschia sp. (strain CCS1).